The chain runs to 266 residues: Thymidylate synthase (266 aa).

Arg-24 serves as a coordination point for dUMP. His-54 is a binding site for (6R)-5,10-methylene-5,6,7,8-tetrahydrofolate. Position 129–130 (129–130 (RR)) interacts with dUMP. Residue Cys-149 is the Nucleophile of the active site. Residues 169-172 (RSAD), Asn-180, and 210-212 (HIY) contribute to the dUMP site. Asp-172 serves as a coordination point for (6R)-5,10-methylene-5,6,7,8-tetrahydrofolate. Position 265 (Ala-265) interacts with (6R)-5,10-methylene-5,6,7,8-tetrahydrofolate.

This sequence belongs to the thymidylate synthase family. Bacterial-type ThyA subfamily. Homodimer.

It localises to the cytoplasm. The catalysed reaction is dUMP + (6R)-5,10-methylene-5,6,7,8-tetrahydrofolate = 7,8-dihydrofolate + dTMP. Its pathway is pyrimidine metabolism; dTTP biosynthesis. Functionally, catalyzes the reductive methylation of 2'-deoxyuridine-5'-monophosphate (dUMP) to 2'-deoxythymidine-5'-monophosphate (dTMP) while utilizing 5,10-methylenetetrahydrofolate (mTHF) as the methyl donor and reductant in the reaction, yielding dihydrofolate (DHF) as a by-product. This enzymatic reaction provides an intracellular de novo source of dTMP, an essential precursor for DNA biosynthesis. The protein is Thymidylate synthase of Nocardia farcinica (strain IFM 10152).